Here is a 477-residue protein sequence, read N- to C-terminus: Adenylyl cyclase-associated protein 2 (477 aa).

A2 is subject to N-acetylalanine. 2 disordered regions span residues 225-261 and 274-321; these read LSSG…PSRS and TKGL…SQKH. Residues 230-246 are compositionally biased toward pro residues; that stretch reads GLPPPPPPLPPPGPPPL. Low complexity predominate over residues 298-320; sequence QTQSPTKSHTPSPTSPKSYPSQK. S301 and S309 each carry phosphoserine. The C-CAP/cofactor C-like domain occupies 317-455; sequence PSQKHAPVLE…QDGDYREFPI (139 aa).

This sequence belongs to the CAP family.

The protein localises to the cell membrane. Involved in the regulation of actin polymerization. In Homo sapiens (Human), this protein is Adenylyl cyclase-associated protein 2 (CAP2).